The chain runs to 238 residues: Uridylate kinase (238 aa).

K12 to G15 provides a ligand contact to ATP. G54 contributes to the UMP binding site. 2 residues coordinate ATP: G55 and R59. UMP is bound by residues D74 and T135–T142. Residues T162, Y168, and D171 each contribute to the ATP site.

Belongs to the UMP kinase family. As to quaternary structure, homohexamer.

It is found in the cytoplasm. It catalyses the reaction UMP + ATP = UDP + ADP. It participates in pyrimidine metabolism; CTP biosynthesis via de novo pathway; UDP from UMP (UMPK route): step 1/1. Inhibited by UTP. In terms of biological role, catalyzes the reversible phosphorylation of UMP to UDP. In Janthinobacterium sp. (strain Marseille) (Minibacterium massiliensis), this protein is Uridylate kinase.